Here is a 22-residue protein sequence, read N- to C-terminus: thr operon leader peptide (22 aa).

It belongs to the thr operon leader peptide family.

In terms of biological role, this protein is involved in control of the biosynthesis of threonine. The chain is thr operon leader peptide from Yersinia pestis bv. Antiqua (strain Antiqua).